Consider the following 440-residue polypeptide: C4-dicarboxylate transport protein (440 aa).

8 helical membrane-spanning segments follow: residues 8–28 (LYLQVLLAVVLGALVGHLFPA), 40–60 (FIKLVKMLIAPIVFATVVTGI), 74–94 (LKGLLYFEVLTTVALAIGLVV), 147–167 (GDILQVLLFSVLFGAALAALK), 187–207 (IVGFVMRLAPVGAFGAMAFTV), 221–241 (LIACFYATSALFVVLMLGLVL), 288–308 (VVGLVVPMGYSFNLDGTSIYL), and 354–374 (AATLSAVGNIPVAGLALLLGV). Residues 419–440 (EEVEPANEPEPPAVPAGAGLHG) form a disordered region.

The protein belongs to the dicarboxylate/amino acid:cation symporter (DAACS) (TC 2.A.23) family.

It is found in the cell inner membrane. Functionally, responsible for the transport of dicarboxylates such as succinate, fumarate, and malate from the periplasm across the membrane. This is C4-dicarboxylate transport protein from Anaeromyxobacter dehalogenans (strain 2CP-1 / ATCC BAA-258).